The chain runs to 376 residues: Probable allantoicase (376 aa).

It belongs to the allantoicase family.

The catalysed reaction is allantoate + H2O = (S)-ureidoglycolate + urea. It functions in the pathway nitrogen metabolism; (S)-allantoin degradation; (S)-ureidoglycolate from allantoate (aminidohydrolase route): step 1/1. The polypeptide is Probable allantoicase (Streptomyces avermitilis (strain ATCC 31267 / DSM 46492 / JCM 5070 / NBRC 14893 / NCIMB 12804 / NRRL 8165 / MA-4680)).